The sequence spans 483 residues: M protein, serotype 6 (483 aa).

An N-terminal signal peptide occupies residues 1 to 42 (MAKNNTNRHYSLRKLKKGTASVAVALSVIGAGLVVNTNEVSA). A coiled-coil region spans residues 54 to 171 (DKARELLNKY…IGTLKKTLDE (118 aa)). 8 tandem repeats follow at residues 69–75 (MLQANND), 76–82 (KLTTENN), 83–89 (NLTDQNK), 90–96 (NLTTENK), 97–103 (NLTDQNK), 104–110 (NLTTENK), 111–117 (NLTDQNK), and 118–124 (NLTTENK). Positions 69-138 (MLQANNDKLT…EENRLTTENK (70 aa)) are 10 X 7 AA approximate tandem repeats of [KMNR]-L-[TQ]-[TDA]-[ENQ]-N-[NDK]. Polar residues predominate over residues 74-87 (NDKLTTENNNLTDQ). The tract at residues 74–157 (NDKLTTENNN…EEEAANKERE (84 aa)) is disordered. Residues 88 to 113 (NKNLTTENKNLTDQNKNLTTENKNLT) are compositionally biased toward low complexity. Basic and acidic residues-rich tracts occupy residues 122-135 (ENKE…RLTT) and 143-157 (KLSE…KERE). A 9-1; approximate repeat occupies 125–131 (ELKAEEN). 5 tandem repeats follow at residues 132–138 (RLTTENK), 157–181 (ENKE…AKEQ), 182–206 (ESKE…AKEQ), 207–231 (ESKE…AKEQ), and 232–256 (ESKE…AREQ). The segment at 157–269 (ENKEAIGTLK…QDIGALKQEL (113 aa)) is 4.5 X 25 AA tandem repeats of E-[NS]-K-E-[TA]-I-G-T-L-K-K-[TI]-L-D-E-T-V-K-D-K-I-A-[KR]-E-Q. Disordered regions lie at residues 255 to 298 (EQKS…EAKK) and 314 to 345 (VKEE…VEKA). The stretch at 257–269 (KSKQDIGALKQEL) is one 5-2; truncated repeat. Composition is skewed to basic and acidic residues over residues 268-298 (ELAK…EAKK) and 328-345 (LRRD…VEKA). 2 C repeats span residues 270–304 (AKKD…EKDL) and 312–346 (DKVK…EKAL). The interval 279-347 (SEASRKGLRR…AKKQVEKALE (69 aa)) is binding to CD46. Residues 279–347 (SEASRKGLRR…AKKQVEKALE (69 aa)) form a two directly repeated 27 amino acid blocks separated by 15 amino acids region. Residues 280–408 (EASRKGLRRD…LAKLRAGKAS (129 aa)) adopt a coiled-coil conformation. The interval 348 to 411 (EANSKLAALE…LRAGKASDSQ (64 aa)) is hydrophilic. D repeat units lie at residues 379–384 (AKLEAE), 385–390 (AKALKE), 393–398 (AKQAEE), and 400–405 (AKLRAG). The interval 400–455 (AKLRAGKASDSQTPDAKPGNKVVPGKGQAPQAGTKPNQNKAPMKETKRQLPSTGET) is disordered. The LPXTG sorting signal motif lies at 449–453 (LPSTG). Position 452 is a pentaglycyl murein peptidoglycan amidated threonine (Thr452). Positions 453-483 (GETANPFFTAAALTVMATAGVAAVVKRKEEN) are cleaved as a propeptide — removed by sortase.

The protein belongs to the M protein family.

The protein resides in the secreted. It localises to the cell wall. Mediates the attachment of S.pyogenes to skin epithelial cells through the binding of the human membrane cofactor protein CD46. Also binds to the factor H and factor H-like protein 1. These interactions could contribute to the fact that the M6 protein protects the bacterium from the phagocytosis by regulating the complement activation on the bacterial surface. This Streptococcus pyogenes protein is M protein, serotype 6 (emm6).